Reading from the N-terminus, the 549-residue chain is Glucose-6-phosphate isomerase (549 aa).

The Proton donor role is filled by Glu-355. Active-site residues include His-386 and Lys-514.

It belongs to the GPI family.

It localises to the cytoplasm. The catalysed reaction is alpha-D-glucose 6-phosphate = beta-D-fructose 6-phosphate. It participates in carbohydrate biosynthesis; gluconeogenesis. The protein operates within carbohydrate degradation; glycolysis; D-glyceraldehyde 3-phosphate and glycerone phosphate from D-glucose: step 2/4. Catalyzes the reversible isomerization of glucose-6-phosphate to fructose-6-phosphate. This chain is Glucose-6-phosphate isomerase, found in Klebsiella pneumoniae subsp. pneumoniae (strain ATCC 700721 / MGH 78578).